Reading from the N-terminus, the 186-residue chain is MLIGYVRVSTNEQNTALQRNALESAGCELIFEDKASGKKAERPGLKKVLRMLSRGDTLVVWKLDRLGRSMRHLVVLVEELRDRGINFRSLTDSIDTSTPMGRFFFHVMGALAEMERELIVERTRAGLDAARAEGRIGGRRPKYQEETWQQMRRLLEKGIPRKQVAIIYDVAVSTLYKKFPASSFQS.

Residues 1-134 (MLIGYVRVST…AGLDAARAEG (134 aa)) form the Resolvase/invertase-type recombinase catalytic domain. The active-site O-(5'-phospho-DNA)-serine intermediate is Ser-9. The segment at residues 161–180 (RKQVAIIYDVAVSTLYKKFP) is a DNA-binding region (H-T-H motif).

Belongs to the site-specific recombinase resolvase family.

Its function is as follows. Performs inversion of a viral 3 kp segment (C-segment) that encodes two alternate pairs of tail fiber proteins thereby modifying the host specificity of the virus. The protein is DNA-invertase (cin) of Enterobacteriaceae (Bacteriophage P1).